The sequence spans 303 residues: Uricase (303 aa).

Active-site charge relay system residues include Lys-12 and Thr-60. Thr-60, Asp-61, Phe-162, Arg-179, Val-234, Gln-235, and Asn-261 together coordinate urate. His-263 serves as the catalytic Charge relay system. The Microbody targeting signal signature appears at 301–303 (TKL).

Belongs to the uricase family.

It localises to the peroxisome. The catalysed reaction is urate + O2 + H2O = 5-hydroxyisourate + H2O2. Its pathway is purine metabolism; urate degradation; (S)-allantoin from urate: step 1/3. In terms of biological role, catalyzes the oxidation of uric acid to 5-hydroxyisourate, which is further processed to form (S)-allantoin. The polypeptide is Uricase (Cyberlindnera jadinii (Torula yeast)).